A 1838-amino-acid polypeptide reads, in one-letter code: Nuclear pore complex protein NUP205 (1838 aa).

The protein belongs to the NUP186/NUP192/NUP205 family. As to quaternary structure, part of the nuclear pore complex (NPC). The NPC has an eight-fold symmetrical structure comprising a central transport channel and two rings, the cytoplasmic and nuclear rings, to which eight filaments are attached. The cytoplasmic filaments have loose ends, while the nuclear filaments are joined in a distal ring, forming a nuclear basket. NPCs are highly dynamic in configuration and composition, and can be devided in 3 subcomplexes, the NUP62 subcomplex, the NUP107-160 subcomplex and the NUP93 subcomplex, containing approximately 30 different nucleoporin proteins.

It localises to the nucleus envelope. The protein localises to the nucleus. Its subcellular location is the nuclear pore complex. In Arabidopsis thaliana (Mouse-ear cress), this protein is Nuclear pore complex protein NUP205.